Reading from the N-terminus, the 160-residue chain is uncharacterized protein (160 aa).

This is an uncharacterized protein from Lactobacillus helveticus (Lactobacillus suntoryeus).